A 154-amino-acid polypeptide reads, in one-letter code: Lipoprotein signal peptidase (154 aa).

Transmembrane regions (helical) follow at residues 55–75 and 84–104; these read GHMWFFYLITVVVIGIIIYIM and LFSISLAFILGGAIGNFIDRV. Residues Asp111 and Asp129 contribute to the active site. The helical transmembrane segment at 124–144 threads the bilayer; it reads IFNVADAALSVGVVLMLVYVF.

This sequence belongs to the peptidase A8 family.

It localises to the cell membrane. The catalysed reaction is Release of signal peptides from bacterial membrane prolipoproteins. Hydrolyzes -Xaa-Yaa-Zaa-|-(S,diacylglyceryl)Cys-, in which Xaa is hydrophobic (preferably Leu), and Yaa (Ala or Ser) and Zaa (Gly or Ala) have small, neutral side chains.. It functions in the pathway protein modification; lipoprotein biosynthesis (signal peptide cleavage). Functionally, this protein specifically catalyzes the removal of signal peptides from prolipoproteins. This chain is Lipoprotein signal peptidase, found in Listeria monocytogenes serotype 4b (strain CLIP80459).